The primary structure comprises 354 residues: Guanine nucleotide-binding protein G(o) subunit alpha (354 aa).

Gly-2 carries the N-myristoyl glycine lipid modification. Cys-3 is lipidated: S-palmitoyl cysteine. A G-alpha domain is found at 32–354; sequence KDIKLLLLGA…ANNLRGCGLY (323 aa). Residues 35 to 48 are G1 motif; sequence KLLLLGAGESGKST. GTP is bound by residues 40–47, 176–182, 201–205, 270–273, and Ala-326; these read GAGESGKS, LRTRVKT, DVGGQ, and NKKD. Residues Ser-47 and Thr-182 each contribute to the Mg(2+) site. The G2 motif stretch occupies residues 174–182; the sequence is DILRTRVKT. The interval 197-206 is G3 motif; sequence FKLFDVGGQR. The interval 266 to 273 is G4 motif; sequence ILFLNKKD. The interval 324–329 is G5 motif; sequence TCATDT.

Belongs to the G-alpha family. G(i/o/t/z) subfamily. In terms of assembly, g proteins are composed of 3 units; alpha, beta and gamma. The alpha chain contains the guanine nucleotide binding site.

Functionally, guanine nucleotide-binding proteins (G proteins) are involved as modulators or transducers in various transmembrane signaling systems. The G(o) protein function is not clear. This is Guanine nucleotide-binding protein G(o) subunit alpha from Planorbella trivolvis (Marsh rams-horn).